A 563-amino-acid polypeptide reads, in one-letter code: Inositol-3-phosphate synthase 1-B (563 aa).

This sequence belongs to the myo-inositol 1-phosphate synthase family. It depends on NAD(+) as a cofactor.

The protein resides in the cytoplasm. It catalyses the reaction D-glucose 6-phosphate = 1D-myo-inositol 3-phosphate. Its pathway is polyol metabolism; myo-inositol biosynthesis; myo-inositol from D-glucose 6-phosphate: step 1/2. Its function is as follows. Key enzyme in myo-inositol biosynthesis pathway that catalyzes the conversion of glucose 6-phosphate to 1-myo-inositol 1-phosphate in a NAD-dependent manner. Rate-limiting enzyme in the synthesis of all inositol-containing compounds. This chain is Inositol-3-phosphate synthase 1-B (isyna1-b), found in Xenopus laevis (African clawed frog).